The primary structure comprises 500 residues: MKQVSNIEELNDQLLVRRQKMTTILENGQDPFGSRFERTHLSTEVKEQFADQTKEQLEENLQEVIIAGRIMTKRGKGKAGFAHIQDLGGQIQIYVRQDHVGEEAYELFKQADLGDIVGIRGNVFRTQVGELSVKAEEFTFLTKALRPMPEKFHGLQDVEQRYRQRYLDLMTNEDSKLTFIARSKIIRAIRNYLDNAGYLEVETPMLHTIAGGAAARPFITHHNALDMELYMRIAIELHLKRLIVGGLEKVYEIGRVFRNEGISTRHNPEFTMIELYEAYADYQDIMSLTENLIAHVAQEVLGTTTVQYGEDEINLAVGWKRVHMVDAVKEATGVDFWQPMTKEQAQALAKEHGVEVKDVHEVGHIINEFFEQKIEETLVQPTFVYGHPVEISPLAKKNPEDERFTDRFELFIVRREHANAFTELNDPIDQRQRFEAQLAEKAAGNDEAHEMDNDFIEALEYGMPPTGGLGIGIDRLIMLLTNSPSIRDVLLFPTMRHITK.

2 residues coordinate Mg(2+): Glu409 and Glu416.

This sequence belongs to the class-II aminoacyl-tRNA synthetase family. Homodimer. It depends on Mg(2+) as a cofactor.

It localises to the cytoplasm. The catalysed reaction is tRNA(Lys) + L-lysine + ATP = L-lysyl-tRNA(Lys) + AMP + diphosphate. This chain is Lysine--tRNA ligase, found in Lysinibacillus sphaericus (strain C3-41).